A 337-amino-acid chain; its full sequence is Ribosomal RNA small subunit methyltransferase C (337 aa).

It belongs to the methyltransferase superfamily. RsmC family. As to quaternary structure, monomer.

The protein localises to the cytoplasm. The catalysed reaction is guanosine(1207) in 16S rRNA + S-adenosyl-L-methionine = N(2)-methylguanosine(1207) in 16S rRNA + S-adenosyl-L-homocysteine + H(+). Its function is as follows. Specifically methylates the guanine in position 1207 of 16S rRNA in the 30S particle. The polypeptide is Ribosomal RNA small subunit methyltransferase C (Acinetobacter baumannii (strain ATCC 17978 / DSM 105126 / CIP 53.77 / LMG 1025 / NCDC KC755 / 5377)).